Consider the following 113-residue polypeptide: Hydrogenase maturation factor HypA (113 aa).

Histidine 2 is a Ni(2+) binding site. Positions 73, 76, 89, and 92 each coordinate Zn(2+).

This sequence belongs to the HypA/HybF family.

Involved in the maturation of [NiFe] hydrogenases. Required for nickel insertion into the metal center of the hydrogenase. The polypeptide is Hydrogenase maturation factor HypA (Rhodobacter capsulatus (Rhodopseudomonas capsulata)).